A 133-amino-acid polypeptide reads, in one-letter code: MIKKYEACFLFKSEELEYKAALEEVKKQLTVFNASDFAENSLGERALEYPIRKQLRGRYEIIEFKMDSENLKELEIQLKLIKNLLRHMILVKINKKVSVKKVKRRNFREFKDNRDIKEKESSEFNSNVDVKVD.

The protein belongs to the bacterial ribosomal protein bS6 family.

Its function is as follows. Binds together with bS18 to 16S ribosomal RNA. The polypeptide is Small ribosomal subunit protein bS6 (Borrelia turicatae (strain 91E135)).